The sequence spans 156 residues: Small ribosomal subunit protein uS7 (156 aa).

It belongs to the universal ribosomal protein uS7 family. In terms of assembly, part of the 30S ribosomal subunit. Contacts proteins S9 and S11.

One of the primary rRNA binding proteins, it binds directly to 16S rRNA where it nucleates assembly of the head domain of the 30S subunit. Is located at the subunit interface close to the decoding center, probably blocks exit of the E-site tRNA. The chain is Small ribosomal subunit protein uS7 from Bacillus cereus (strain G9842).